The chain runs to 263 residues: HTH-type transcriptional regulator KdgR (263 aa).

One can recognise an HTH iclR-type domain in the interval 13–74 (VSSVLKVFGI…GESEKYSLTL (62 aa)). Positions 34–53 (ITELSQRVMMSKSTVYRFLQ) form a DNA-binding region, H-T-H motif. Residues 89–258 (LIRSADIQMR…ARKISAQMGY (170 aa)) enclose the IclR-ED domain.

It localises to the cytoplasm. Its function is as follows. Transcriptional repressor that negatively regulates the expression of kdgT, kdgK and kdgA, which encode proteins involved in transport and catabolism of 2-keto-3-deoxygluconate (KDG). Also represses expression of eda, which encodes the Entner-Doudoroff aldolase, by binding to its P2 promoter region. The sequence is that of HTH-type transcriptional regulator KdgR from Escherichia coli (strain K12).